A 475-amino-acid polypeptide reads, in one-letter code: Doublecortin domain-containing protein 2 (475 aa).

Doublecortin domains are found at residues 17 to 100 and 139 to 221; these read KSVL…LNYL and CTIF…LPYS. Residues 234–475 are disordered; the sequence is YGQKASSLPP…ESNKASSAVA (242 aa). The segment covering 252 to 272 has biased composition (polar residues); it reads GSGNYRQSKSTIGSSDNSSPQ. Ser-270 is subject to Phosphoserine. A compositionally biased stretch (basic and acidic residues) spans 353–365; it reads EKTSKDANQKDDF. Residues 407–419 show a composition bias toward acidic residues; that stretch reads TDEENGEELDQVT. Over residues 455–475 the composition is skewed to polar residues; that stretch reads TVTSPQENEGNESNKASSAVA.

In terms of assembly, interacts with DVL1, DVL2 and DVL3. Expressed in hair cells of the inner ear.

The protein localises to the cell projection. Its subcellular location is the cilium. It localises to the cytoplasm. The protein resides in the cytoskeleton. It is found in the cilium axoneme. The protein localises to the kinocilium. In terms of biological role, protein that plays a role in the inhibition of canonical Wnt signaling pathway. May be involved in neuronal migration during development of the cerebral neocortex. Involved in the control of ciliogenesis and ciliary length. The sequence is that of Doublecortin domain-containing protein 2 (Dcdc2) from Rattus norvegicus (Rat).